We begin with the raw amino-acid sequence, 80 residues long: Large ribosomal subunit protein eL13 (80 aa).

The protein belongs to the eukaryotic ribosomal protein eL13 family.

The protein is Large ribosomal subunit protein eL13 of Aeropyrum pernix (strain ATCC 700893 / DSM 11879 / JCM 9820 / NBRC 100138 / K1).